The primary structure comprises 448 residues: Nicotinate phosphoribosyltransferase pncB1 (448 aa).

The interval 1–21 (MGPPPAARRREGEPDNQDPAG) is disordered. His-212 is subject to Phosphohistidine. Residues 353–372 (RSSYKESPGGRKEALRRSRA) are disordered.

Belongs to the NAPRTase family. Post-translationally, transiently phosphorylated on a His residue during the reaction cycle. Phosphorylation strongly increases the affinity for substrates and increases the rate of nicotinate D-ribonucleotide production. Dephosphorylation regenerates the low-affinity form of the enzyme, leading to product release.

It catalyses the reaction nicotinate + 5-phospho-alpha-D-ribose 1-diphosphate + ATP + H2O = nicotinate beta-D-ribonucleotide + ADP + phosphate + diphosphate. It functions in the pathway cofactor biosynthesis; NAD(+) biosynthesis; nicotinate D-ribonucleotide from nicotinate: step 1/1. In terms of biological role, involved in the Preiss-Handler pathway, which is a recycling route that permits the salvage of free nicotinamide (NM) and nicotinic acid (Na) involved in the NAD biosynthesis. Catalyzes the synthesis of beta-nicotinate D-ribonucleotide from nicotinate and 5-phospho-D-ribose 1-phosphate at the expense of ATP. It is not able to use nicotinamide. PncB1 contributes to basal NAD level. This chain is Nicotinate phosphoribosyltransferase pncB1 (pncB1), found in Mycobacterium tuberculosis (strain CDC 1551 / Oshkosh).